The following is a 345-amino-acid chain: Myb/SANT-like DNA-binding domain-containing protein 4 (345 aa).

Residues 4–77 (LKRKRKSNFS…EVKRRYLDWR (74 aa)) form the Myb-like domain. Residue Lys-9 forms a Glycyl lysine isopeptide (Lys-Gly) (interchain with G-Cter in SUMO2) linkage. Ser-106 is subject to Phosphoserine. Glycyl lysine isopeptide (Lys-Gly) (interchain with G-Cter in SUMO2) cross-links involve residues Lys-114 and Lys-142. Residues 143–175 (VEEEERDPQSPEFEIEEEEEMLSSVIPDSRREN) form a disordered region. Residue Thr-188 is modified to Phosphothreonine. A coiled-coil region spans residues 203–345 (LLVNIEKQKL…LRIQKEGHLQ (143 aa)). Glycyl lysine isopeptide (Lys-Gly) (interchain with G-Cter in SUMO2) cross-links involve residues Lys-237, Lys-254, and Lys-273.

This chain is Myb/SANT-like DNA-binding domain-containing protein 4 (MSANTD4), found in Homo sapiens (Human).